Here is a 240-residue protein sequence, read N- to C-terminus: Putative cytochrome c-type biogenesis protein DbsD-like (240 aa).

A run of 6 helical transmembrane segments spans residues 32-52 (FVFF…ILPI), 74-94 (FFFC…ATLL), 104-124 (GIPV…LNIV), 149-169 (VGIG…LLIW), 176-196 (LFIG…PIII), and 218-238 (APFS…SSIL).

Belongs to the DsbD family.

The protein localises to the plastid. It is found in the chloroplast membrane. Functionally, could be involved in cytochrome c synthesis. In Porphyra purpurea (Red seaweed), this protein is Putative cytochrome c-type biogenesis protein DbsD-like.